A 596-amino-acid polypeptide reads, in one-letter code: MADAEASATMADEAKPDSKTLQILRDMANRLRIHSIRATCASSSGHPISCSSAAEIMSVLFFHVMRYKQADPKNPDNDRFILSKRLSFVDVATGWLGQGLGAACGMAYTGKYFDKASYRVFCLVGDVESWEGSVWEALAFASHYSLDNLVAIFDVNRLTHSTTLPLEHSIDVYQKRCEAFGWNTLVVDGRDVEALCQVFWQAAQMKNKPTAVVAKTFKGRGIPSVEDAENWHGKPMPKERADAIIKLIESQIETNKSLEPKAPIEDSPQINISVIEMTSPPDYEISDVIATRKACGLALAKLGHANDRVIVLDGDTKNSTFSDIFKREHPERFIECFIAEQNMVSVALGCVTRGRTVAFACTFAAFLTRAFDQIRMGGISQTNINLIGSHCGVSIGEDGPSQMALEDLAMFRAIPNCTIFYPSDAISTEHAVFLAANIKGMCYIRTSRPETAIIYTPQESFEIGQAKVIRQSVNDKITVVGAGITLHEALAAADDLSKQGISLRVIDLFTVKPLDAATIISNAKATGGQIITVEDHYPEGGIGEAVSAAVSMEPDIVVHHLAVSGIPRSGKPSDLLDMFGISSKHIIWAVERILMK.

Residue histidine 46 participates in substrate binding. Residues serine 49 and 94-96 (GWL) each bind thiamine diphosphate. Aspartate 126 contributes to the Mg(2+) binding site. Valine 127 and asparagine 156 together coordinate thiamine diphosphate. Mg(2+)-binding residues include asparagine 156 and leucine 158. The thiamine diphosphate site is built by lysine 218 and histidine 232. Positions 232, 292, and 319 each coordinate substrate. Thiamine diphosphate contacts are provided by glutamate 340 and phenylalanine 366. Glutamate 340 serves as the catalytic Proton donor. Positions 390 and 398 each coordinate substrate. Glutamine 402 contacts thiamine diphosphate. Residue arginine 448 participates in substrate binding.

Belongs to the transketolase family. Homodimer. Requires Mg(2+) as cofactor. It depends on Ca(2+) as a cofactor. The cofactor is Mn(2+). Co(2+) serves as cofactor. Thiamine diphosphate is required as a cofactor.

It localises to the cytoplasm. It catalyses the reaction D-sedoheptulose 7-phosphate + D-glyceraldehyde 3-phosphate = aldehydo-D-ribose 5-phosphate + D-xylulose 5-phosphate. In terms of biological role, catalyzes the transfer of a two-carbon ketol group from a ketose donor to an aldose acceptor, via a covalent intermediate with the cofactor thiamine pyrophosphate. This Bos taurus (Bovine) protein is Transketolase-like protein 1 (TKTL1).